The following is a 366-amino-acid chain: Terpene synthase 4 (366 aa).

Positions 91-96 (DDFLER) match the DDxx(x)D/E motif motif. Residues 241 to 249 (NDCVSYAKE) carry the NDxxSxxxD/E motif motif.

It belongs to the terpene synthase family.

The enzyme catalyses (2E,6E)-farnesyl diphosphate = (1S,2S,4R)-beta-elemene + diphosphate. Its function is as follows. Terpene synthase that converts its substrate farnesyl diphosphate (FPP) into the sesquiterpenes bicycloelemene, beta-elemene and 2 yet unidentified sesquiterpenes. The chain is Terpene synthase 4 from Dictyostelium purpureum (Slime mold).